Consider the following 409-residue polypeptide: Arginine deiminase (409 aa).

The active-site Amidino-cysteine intermediate is the cysteine 399.

This sequence belongs to the arginine deiminase family.

The protein resides in the cytoplasm. It catalyses the reaction L-arginine + H2O = L-citrulline + NH4(+). The protein operates within amino-acid degradation; L-arginine degradation via ADI pathway; carbamoyl phosphate from L-arginine: step 1/2. The protein is Arginine deiminase of Streptococcus pneumoniae serotype 19F (strain G54).